A 279-amino-acid chain; its full sequence is MSPERPPRTDIPRNLSFIAALTERAYYRSQRPSLEEESEEEPGEGGTRPGARSRAHVPGRGRRARSAPAGGGGARTARSRSPDTRKRVRFADALGLELAVVRRFRPGEPPRVPRHVQVQLQRDALRHFAPCPPRARGLQEARVALEPALEPGFAARLQAQRICLERADAGPLGVAGSARVLDLAYEKRVSVRWSADGWRSLRESPASYAGPAPSPPRADRFAFRLPAPPVGGTLLFALRYRVTGREFWDNNGGRDYALLGPEHPAGAGAAEPQGWIHFI.

A phosphoserine mark is found at Ser16 and Ser33. Residues 28–87 (RSQRPSLEEESEEEPGEGGTRPGARSRAHVPGRGRRARSAPAGGGGARTARSRSPDTRKR) form a disordered region. The segment covering 51-65 (ARSRAHVPGRGRRAR) has biased composition (basic residues). A Phosphoserine modification is found at Ser66. The short motif at 87-90 (RVRF) is the PP1-binding motif element. The 106-residue stretch at 154-259 (AARLQAQRIC…NNGGRDYALL (106 aa)) folds into the CBM21 domain. The segment at 176-198 (GSARVLDLAYEKRVSVRWSADGW) is glycogen-binding motif. The tract at residues 248-256 (WDNNGGRDY) is substrate-binding motif.

Acts as a glycogen-targeting subunit for PP1. PP1 is involved in glycogen metabolism and contributes to the activation of glycogen synthase leading to an increase in glycogen synthesis. This chain is Protein phosphatase 1 regulatory subunit 3E (Ppp1r3e), found in Mus musculus (Mouse).